A 156-amino-acid chain; its full sequence is ATP synthase subunit b (156 aa).

A helical membrane pass occupies residues 7-29; sequence LFAQMVVFLVLAWFTMKFVWPPL.

Belongs to the ATPase B chain family. In terms of assembly, F-type ATPases have 2 components, F(1) - the catalytic core - and F(0) - the membrane proton channel. F(1) has five subunits: alpha(3), beta(3), gamma(1), delta(1), epsilon(1). F(0) has three main subunits: a(1), b(2) and c(10-14). The alpha and beta chains form an alternating ring which encloses part of the gamma chain. F(1) is attached to F(0) by a central stalk formed by the gamma and epsilon chains, while a peripheral stalk is formed by the delta and b chains.

The protein resides in the cell inner membrane. In terms of biological role, f(1)F(0) ATP synthase produces ATP from ADP in the presence of a proton or sodium gradient. F-type ATPases consist of two structural domains, F(1) containing the extramembraneous catalytic core and F(0) containing the membrane proton channel, linked together by a central stalk and a peripheral stalk. During catalysis, ATP synthesis in the catalytic domain of F(1) is coupled via a rotary mechanism of the central stalk subunits to proton translocation. Component of the F(0) channel, it forms part of the peripheral stalk, linking F(1) to F(0). This chain is ATP synthase subunit b, found in Burkholderia vietnamiensis (strain G4 / LMG 22486) (Burkholderia cepacia (strain R1808)).